A 964-amino-acid chain; its full sequence is Glycine dehydrogenase (decarboxylating) (964 aa).

The segment covering Met-1–Thr-11 has biased composition (polar residues). The tract at residues Met-1 to Leu-21 is disordered. Lys-713 carries the N6-(pyridoxal phosphate)lysine modification.

Belongs to the GcvP family. The glycine cleavage system is composed of four proteins: P, T, L and H. Requires pyridoxal 5'-phosphate as cofactor.

It carries out the reaction N(6)-[(R)-lipoyl]-L-lysyl-[glycine-cleavage complex H protein] + glycine + H(+) = N(6)-[(R)-S(8)-aminomethyldihydrolipoyl]-L-lysyl-[glycine-cleavage complex H protein] + CO2. The glycine cleavage system catalyzes the degradation of glycine. The P protein binds the alpha-amino group of glycine through its pyridoxal phosphate cofactor; CO(2) is released and the remaining methylamine moiety is then transferred to the lipoamide cofactor of the H protein. In Leptospira interrogans serogroup Icterohaemorrhagiae serovar copenhageni (strain Fiocruz L1-130), this protein is Glycine dehydrogenase (decarboxylating).